The following is a 133-amino-acid chain: Large ribosomal subunit protein bL12 (133 aa).

The protein belongs to the bacterial ribosomal protein bL12 family. As to quaternary structure, homodimer. Part of the ribosomal stalk of the 50S ribosomal subunit. Forms a multimeric L10(L12)X complex, where L10 forms an elongated spine to which 2 to 4 L12 dimers bind in a sequential fashion. Binds GTP-bound translation factors.

Its function is as follows. Forms part of the ribosomal stalk which helps the ribosome interact with GTP-bound translation factors. Is thus essential for accurate translation. In Ehrlichia chaffeensis (strain ATCC CRL-10679 / Arkansas), this protein is Large ribosomal subunit protein bL12.